The following is a 377-amino-acid chain: Sodium-dependent organic anion transporter (377 aa).

Residues 1–29 (MRANCSSGLACPANSSEEELPEGLKAFGN) are Extracellular-facing. Asparagine 4 carries an N-linked (GlcNAc...) asparagine glycan. A helical transmembrane segment spans residues 30 to 50 (LDLVFTVVSALMIGLLMFSLG). The Cytoplasmic portion of the chain corresponds to 51 to 67 (CSVEVQKLWGHIRRPWG). A helical membrane pass occupies residues 68-88 (IAVGMLCQFGLMPLIAYLLII). The Extracellular portion of the chain corresponds to 89–97 (SFSLKPLQA). The chain crosses the membrane as a helical span at residues 98 to 118 (IAVLIMGCCPGGTVSNIFTFW). Residues 119–133 (VDGDMDLSISMTTCS) lie on the Cytoplasmic side of the membrane. The helical transmembrane segment at 134–154 (TMAALGMMPLCLYLYTLSWNL) threads the bilayer. Topologically, residues 155–159 (EQNLT) are extracellular. The N-linked (GlcNAc...) asparagine glycan is linked to asparagine 157. Residues 160-180 (IPYQNIGITLVCLIIPVAFGI) traverse the membrane as a helical segment. Over 181–195 (YVNYRWPKQSKIILK) the chain is Cytoplasmic. The chain crosses the membrane as a helical span at residues 196–216 (IGAIAGGLLFLVVTGAGMVLM). The Extracellular portion of the chain corresponds to 217 to 223 (KEFWSSD). A helical membrane pass occupies residues 224-244 (IILLMISFIFPLIGHATGFLL). Over 245–257 (ALLTHQSWQRCRT) the chain is Cytoplasmic. The helical transmembrane segment at 258 to 278 (ISLETGTQNVQMCFTMLQLSF) threads the bilayer. The Extracellular segment spans residues 279-285 (TAEQLVQ). The helical transmembrane segment at 286–306 (IFGFVLAYGLFQMLNGFFMVA) threads the bilayer. Residues 307–377 (AYKMYKRRLK…TPTGDIARAK (71 aa)) are Cytoplasmic-facing. Positions 319–377 (HGNEKPSCQEARHRKKSTSPKETTAFLEVNEEATLSPGPSGPVDPHGAPTPTGDIARAK) are disordered.

The protein belongs to the bile acid:sodium symporter (BASS) (TC 2.A.28) family. Glycosylated.

It localises to the membrane. It catalyses the reaction estrone 3-sulfate(out) + 2 Na(+)(out) = estrone 3-sulfate(in) + 2 Na(+)(in). It carries out the reaction 17beta-estradiol 3-sulfate(out) + 2 Na(+)(out) = 17beta-estradiol 3-sulfate(in) + 2 Na(+)(in). The enzyme catalyses dehydroepiandrosterone 3-sulfate(out) + 2 Na(+)(out) = dehydroepiandrosterone 3-sulfate(in) + 2 Na(+)(in). The catalysed reaction is androst-5-ene-diol 3-sulfate(out) + 2 Na(+)(out) = androst-5-ene-diol 3-sulfate(in) + 2 Na(+)(in). It catalyses the reaction pregnenolone sulfate(out) + 2 Na(+)(out) = pregnenolone sulfate(in) + 2 Na(+)(in). It carries out the reaction taurolithocholate 3-sulfate(out) + 2 Na(+)(out) = taurolithocholate 3-sulfate(in) + 2 Na(+)(in). The enzyme catalyses androsterone 3alpha-sulfate(out) + 2 Na(+)(out) = androsterone 3alpha-sulfate(in) + 2 Na(+)(in). The catalysed reaction is 5alpha-dihydrotestosterone sulfate(out) + 2 Na(+)(out) = 5alpha-dihydrotestosterone sulfate(in) + 2 Na(+)(in). It catalyses the reaction 17beta-estradiol 17-sulfate(out) + 2 Na(+)(out) = 17beta-estradiol 17-sulfate(in) + 2 Na(+)(in). It carries out the reaction 17alpha-hydroxypregnenolone 3-sulfate(out) + 2 Na(+)(out) = 17alpha-hydroxypregnenolone 3-sulfate(in) + 2 Na(+)(in). The enzyme catalyses epiandrosterone 3-sulfate(out) + 2 Na(+)(out) = epiandrosterone 3-sulfate(in) + 2 Na(+)(in). The catalysed reaction is epitestosterone 17-sulfate(out) + 2 Na(+)(out) = epitestosterone 17-sulfate(in) + 2 Na(+)(in). It catalyses the reaction testosterone 17-sulfate(out) + 2 Na(+)(out) = testosterone 17-sulfate(in) + 2 Na(+)(in). It carries out the reaction 16alpha-hydroxydehydroepiandrosterone 3-sulfate(out) + 2 Na(+)(out) = 16alpha-hydroxydehydroepiandrosterone 3-sulfate(in) + 2 Na(+)(in). In terms of biological role, transports sulfoconjugated steroid hormones from the extracellular compartment into the cytosol in a sodium-dependent manner without hydrolysis. Steroid sulfate hormones are commonly considered to be biologically inactive metabolites, that may be activated by steroid sulfatases into free steroids. May play an important role by delivering sulfoconjugated steroids to specific target cells in reproductive organs. May play a role transporting the estriol precursor 16alpha-hydroxydehydroepiandrosterone 3-sulfate (16a-OH-DHEAS) at the fetal blood vessel endothelium. Can also transport other sulfoconjugated molecules such as taurolithocholic acid-3-sulfate and sulfoconjugated pyrenes. This Bos taurus (Bovine) protein is Sodium-dependent organic anion transporter (SLC10A6).